The following is a 204-amino-acid chain: Tumor protein D53 (204 aa).

The interval 1–31 (MEAQAQGLLETEPLQGRDGDAVGSADFSSML) is disordered. Residues 22 to 73 (VGSADFSSMLSEEEKEELKAELIQLEDEITTLRQVLSAKERHLVEIKQKLGM) are a coiled coil. Phosphoserine is present on residues Ser29, Ser86, Ser122, and Ser131. An Omega-N-methylarginine modification is found at Arg133. Thr146 is subject to Phosphothreonine. Phosphoserine occurs at positions 149 and 174. The tract at residues 164–204 (KVGGTNHGGGSFEEVLNSTAHASSQNASAGSRQTKDEELQC) is disordered. Over residues 179–195 (LNSTAHASSQNASAGSR) the composition is skewed to polar residues.

Belongs to the TPD52 family. Forms a homodimer or heterodimer with other members of the family.

The polypeptide is Tumor protein D53 (Tpd52l1) (Mus musculus (Mouse)).